The chain runs to 512 residues: 2,3-bisphosphoglycerate-independent phosphoglycerate mutase (512 aa).

D14 and S64 together coordinate Mn(2+). S64 functions as the Phosphoserine intermediate in the catalytic mechanism. Residues H125, 155–156, R187, R193, 259–262, and K332 each bind substrate; these read RD and RADR. Mn(2+) contacts are provided by D399, H403, D440, H441, and H459.

Belongs to the BPG-independent phosphoglycerate mutase family. In terms of assembly, monomer. It depends on Mn(2+) as a cofactor.

It carries out the reaction (2R)-2-phosphoglycerate = (2R)-3-phosphoglycerate. It functions in the pathway carbohydrate degradation; glycolysis; pyruvate from D-glyceraldehyde 3-phosphate: step 3/5. In terms of biological role, catalyzes the interconversion of 2-phosphoglycerate and 3-phosphoglycerate. In Ruthia magnifica subsp. Calyptogena magnifica, this protein is 2,3-bisphosphoglycerate-independent phosphoglycerate mutase.